The chain runs to 369 residues: Protein VP6 (369 aa).

Disordered stretches follow at residues 17–169 (KREL…LQGR) and 184–208 (LDRI…GGDR). Residues 29-68 (LREKGSTEAKSKLKEDGEKKNKSEKEENKIHDDRRVESQK) show a composition bias toward basic and acidic residues. The segment covering 92 to 111 (TGGGDGSAGARTGIGGGGVG) has biased composition (gly residues). Basic and acidic residues-rich tracts occupy residues 137–148 (TGADRVANDDAT) and 196–208 (TEGE…GGDR).

It belongs to the orbivirus VP6 family.

It localises to the virion. This is Protein VP6 (Segment-9) from African horse sickness virus (AHSV).